The following is a 347-amino-acid chain: Phosphoribosylformylglycinamidine cyclo-ligase (347 aa).

The protein belongs to the AIR synthase family.

The protein localises to the cytoplasm. It catalyses the reaction 2-formamido-N(1)-(5-O-phospho-beta-D-ribosyl)acetamidine + ATP = 5-amino-1-(5-phospho-beta-D-ribosyl)imidazole + ADP + phosphate + H(+). It participates in purine metabolism; IMP biosynthesis via de novo pathway; 5-amino-1-(5-phospho-D-ribosyl)imidazole from N(2)-formyl-N(1)-(5-phospho-D-ribosyl)glycinamide: step 2/2. The chain is Phosphoribosylformylglycinamidine cyclo-ligase from Bacillus cytotoxicus (strain DSM 22905 / CIP 110041 / 391-98 / NVH 391-98).